The primary structure comprises 275 residues: Fructose-2,6-bisphosphatase TIGAR (275 aa).

Residue His-11 is the Tele-phosphohistidine intermediate of the active site. The active-site Proton donor/acceptor is the Glu-89.

It belongs to the phosphoglycerate mutase family.

The protein resides in the cytoplasm. Its subcellular location is the nucleus. The protein localises to the mitochondrion. It carries out the reaction beta-D-fructose 2,6-bisphosphate + H2O = beta-D-fructose 6-phosphate + phosphate. Fructose-bisphosphatase hydrolyzing fructose-2,6-bisphosphate as well as fructose-1,6-bisphosphate. Acts as a negative regulator of glycolysis by lowering intracellular levels of fructose-2,6-bisphosphate in a p53/TP53-dependent manner, resulting in the pentose phosphate pathway (PPP) activation and NADPH production. Contributes to the generation of reduced glutathione to cause a decrease in intracellular reactive oxygen species (ROS) content, correlating with its ability to protect cells from oxidative or metabolic stress-induced cell death. May play a role in mitophagy inhibition. This chain is Fructose-2,6-bisphosphatase TIGAR, found in Xenopus laevis (African clawed frog).